We begin with the raw amino-acid sequence, 261 residues long: Putative cysteine protease YopT-like y4zC (261 aa).

Positions 1 to 15 (MHSPISGSFTSSTQV) are enriched in polar residues. Disordered stretches follow at residues 1-48 (MHSP…CPDK) and 54-73 (SKPQ…ARPS). The span at 61–73 (PNNPSTSSPARPS) shows a compositional bias: low complexity. Catalysis depends on residues Cys93, His205, and Asp220.

It belongs to the peptidase C58 family.

In terms of biological role, potential cysteine protease, which may play a central role after invasion of host cell. The protein is Putative cysteine protease YopT-like y4zC of Sinorhizobium fredii (strain NBRC 101917 / NGR234).